We begin with the raw amino-acid sequence, 417 residues long: Serine hydroxymethyltransferase (417 aa).

(6S)-5,6,7,8-tetrahydrofolate-binding positions include L121 and G125–L127. K230 is subject to N6-(pyridoxal phosphate)lysine. S355 to F357 is a (6S)-5,6,7,8-tetrahydrofolate binding site.

Belongs to the SHMT family. As to quaternary structure, homodimer. Pyridoxal 5'-phosphate is required as a cofactor.

The protein resides in the cytoplasm. The enzyme catalyses (6R)-5,10-methylene-5,6,7,8-tetrahydrofolate + glycine + H2O = (6S)-5,6,7,8-tetrahydrofolate + L-serine. Its pathway is one-carbon metabolism; tetrahydrofolate interconversion. The protein operates within amino-acid biosynthesis; glycine biosynthesis; glycine from L-serine: step 1/1. Catalyzes the reversible interconversion of serine and glycine with tetrahydrofolate (THF) serving as the one-carbon carrier. This reaction serves as the major source of one-carbon groups required for the biosynthesis of purines, thymidylate, methionine, and other important biomolecules. Also exhibits THF-independent aldolase activity toward beta-hydroxyamino acids, producing glycine and aldehydes, via a retro-aldol mechanism. This is Serine hydroxymethyltransferase from Marinobacter nauticus (strain ATCC 700491 / DSM 11845 / VT8) (Marinobacter aquaeolei).